Reading from the N-terminus, the 298-residue chain is Spermidine synthase (298 aa).

Positions 13–248 (DGWFREINNM…GSIGFVVASK (236 aa)) constitute a PABS domain. Q44 provides a ligand contact to S-adenosyl 3-(methylsulfanyl)propylamine. Y74 provides a ligand contact to putrescine. Residues Q75, D99, D119, 150–151 (DG), and D168 each bind S-adenosyl 3-(methylsulfanyl)propylamine. D168 acts as the Proton acceptor in catalysis. Putrescine is bound by residues 168-171 (DSSD) and Y236.

Belongs to the spermidine/spermine synthase family.

The catalysed reaction is S-adenosyl 3-(methylsulfanyl)propylamine + putrescine = S-methyl-5'-thioadenosine + spermidine + H(+). The protein operates within amine and polyamine biosynthesis; spermidine biosynthesis; spermidine from putrescine: step 1/1. The sequence is that of Spermidine synthase from Schizosaccharomyces pombe (strain 972 / ATCC 24843) (Fission yeast).